A 61-amino-acid chain; its full sequence is MAKTSLKIKQARHAKFKVRAYTRCKRCGRPHAVYRKFGICRLCFRHLAYNGSLPGVKKSSW.

C24, C27, C40, and C43 together coordinate Zn(2+).

The protein belongs to the universal ribosomal protein uS14 family. Zinc-binding uS14 subfamily. As to quaternary structure, part of the 30S ribosomal subunit. Contacts proteins S3 and S10. Requires Zn(2+) as cofactor.

Functionally, binds 16S rRNA, required for the assembly of 30S particles and may also be responsible for determining the conformation of the 16S rRNA at the A site. This chain is Small ribosomal subunit protein uS14, found in Mycoplasmoides gallisepticum (strain R(low / passage 15 / clone 2)) (Mycoplasma gallisepticum).